The primary structure comprises 220 residues: ATP-dependent Clp protease proteolytic subunit (220 aa).

Ser125 acts as the Nucleophile in catalysis. Residue His150 is part of the active site.

The protein belongs to the peptidase S14 family. As to quaternary structure, fourteen ClpP subunits assemble into 2 heptameric rings which stack back to back to give a disk-like structure with a central cavity, resembling the structure of eukaryotic proteasomes.

The protein localises to the cytoplasm. It carries out the reaction Hydrolysis of proteins to small peptides in the presence of ATP and magnesium. alpha-casein is the usual test substrate. In the absence of ATP, only oligopeptides shorter than five residues are hydrolyzed (such as succinyl-Leu-Tyr-|-NHMec, and Leu-Tyr-Leu-|-Tyr-Trp, in which cleavage of the -Tyr-|-Leu- and -Tyr-|-Trp bonds also occurs).. Functionally, cleaves peptides in various proteins in a process that requires ATP hydrolysis. Has a chymotrypsin-like activity. Plays a major role in the degradation of misfolded proteins. The sequence is that of ATP-dependent Clp protease proteolytic subunit from Bacteroides fragilis (strain YCH46).